The primary structure comprises 242 residues: ATP synthase subunit a, organellar chromatophore (242 aa).

Transmembrane regions (helical) follow at residues 28–48, 89–109, 128–148, 193–213, and 214–234; these read LHGQ…VLVI, LPFI…GALV, INTT…AGLS, LVVG…AMFL, and GLFT…NYIG.

It belongs to the ATPase A chain family. F-type ATPases have 2 components, CF(1) - the catalytic core - and CF(0) - the membrane proton channel. CF(1) has five subunits: alpha(3), beta(3), gamma(1), delta(1), epsilon(1). CF(0) has four main subunits: a, b, b' and c.

It localises to the plastid. It is found in the organellar chromatophore thylakoid membrane. Its function is as follows. Key component of the proton channel; it plays a direct role in the translocation of protons across the membrane. The polypeptide is ATP synthase subunit a, organellar chromatophore (Paulinella chromatophora).